The following is a 474-amino-acid chain: Neuronal acetylcholine receptor subunit eat-2 (474 aa).

The N-terminal stretch at 1-21 (MTLKIAFFTLILLVSIERVYS) is a signal peptide. At 22 to 237 (SDEEYRLLKD…MHLKRRTMYY (216 aa)) the chain is on the extracellular side. A glycan (N-linked (GlcNAc...) asparagine) is linked at N95. Cysteines 149 and 163 form a disulfide. The next 3 helical transmembrane spans lie at 238 to 258 (GLNW…GFTM), 266 to 286 (ITLQ…VSEV), and 303 to 323 (LSIV…NIFF). Residues 324 to 440 (RHPKTHRMGD…WRFMAMVIDR (117 aa)) are Cytoplasmic-facing. Positions 359 to 378 (PRREEEKNDEEAGGDGTKLL) are disordered. Residues 441–461 (LSLFLFTGLIFGTTALIFAFC) traverse the membrane as a helical segment.

Belongs to the ligand-gated ion channel (TC 1.A.9) family. Acetylcholine receptor (TC 1.A.9.1) subfamily. As to quaternary structure, neuronal AChR seems to be composed of two different type of subunits: alpha and beta. As to expression, expressed in pharyngeal muscle.

It localises to the postsynaptic cell membrane. Its subcellular location is the cell membrane. Functionally, after binding acetylcholine, the AChR responds by an extensive change in conformation that affects all subunits and leads to opening of an ion-conducting channel across the plasma membrane. Nicotinic acetylcholine receptor in the MC pharyngeal motor neuron involved in pharyngeal pumping. Has a role in the determination of life span possibly via calorific restriction which affects growth rate, although this is independent of metabolic activity. Plays a role in the defense against the accumulation of ingested live pathogenic bacteria in the intestine. This chain is Neuronal acetylcholine receptor subunit eat-2, found in Caenorhabditis elegans.